The chain runs to 268 residues: Tryptophan synthase alpha chain (268 aa).

Residues glutamate 40 and aspartate 51 each act as proton acceptor in the active site.

Belongs to the TrpA family. As to quaternary structure, tetramer of two alpha and two beta chains.

It carries out the reaction (1S,2R)-1-C-(indol-3-yl)glycerol 3-phosphate + L-serine = D-glyceraldehyde 3-phosphate + L-tryptophan + H2O. Its pathway is amino-acid biosynthesis; L-tryptophan biosynthesis; L-tryptophan from chorismate: step 5/5. Functionally, the alpha subunit is responsible for the aldol cleavage of indoleglycerol phosphate to indole and glyceraldehyde 3-phosphate. The polypeptide is Tryptophan synthase alpha chain (Geobacillus kaustophilus (strain HTA426)).